We begin with the raw amino-acid sequence, 248 residues long: Serine/arginine-rich splicing factor 1 (248 aa).

Serine 2 carries the N-acetylserine modification. Residue serine 2 is modified to Phosphoserine. The 76-residue stretch at 16 to 91 (CRIYVGNLPP…YRLRVEFPRS (76 aa)) folds into the RRM 1 domain. A Glycyl lysine isopeptide (Lys-Gly) (interchain with G-Cter in SUMO2) cross-link involves residue lysine 30. At lysine 38 the chain carries N6-acetyllysine; alternate. A Glycyl lysine isopeptide (Lys-Gly) (interchain with G-Cter in SUMO2); alternate cross-link involves residue lysine 38. The tract at residues 88-134 (FPRSGRGTGRGGGGGGGGGAPRGRYGPPSRRSENRVVVSGLPPSGSW) is disordered. Residues arginine 93, arginine 97, and arginine 109 each carry the asymmetric dimethylarginine; alternate modification. Residues arginine 93, arginine 97, and arginine 109 each carry the omega-N-methylarginine; alternate modification. A compositionally biased stretch (gly residues) spans 93–108 (RGTGRGGGGGGGGGAP). An Omega-N-methylarginine modification is found at arginine 111. One can recognise an RRM 2 domain in the interval 121-195 (NRVVVSGLPP…ETAYIRVKVD (75 aa)). Serine 133 is subject to Phosphoserine. N6-acetyllysine is present on lysine 179. Residues 191–248 (RVKVDGPRSPSYGRSRSRSRSRSRSRSRSNSRSRSYSPRRSRGSPRYSPRHSRSRSRT) form a disordered region. An interaction with SAFB1 region spans residues 198 to 247 (RSPSYGRSRSRSRSRSRSRSRSNSRSRSYSPRRSRGSPRYSPRHSRSRSR). Phosphoserine is present on residues serine 199 and serine 201. Tyrosine 202 bears the Phosphotyrosine mark. Serine 205, serine 207, serine 209, serine 231, serine 234, and serine 238 each carry phosphoserine. Positions 205-248 (SRSRSRSRSRSRSRSNSRSRSYSPRRSRGSPRYSPRHSRSRSRT) are enriched in basic residues.

This sequence belongs to the splicing factor SR family. In terms of assembly, consists of two polypeptides of p32 and p33. Identified in the spliceosome C complex. Component of a ribonucleoprotein complex containing mRNAs and RNA-binding proteins including DDX5, HNRNPH2 and SRSF1 as well as splicing regulator ARVCF. In vitro, self-associates and binds SRSF2, SNRNP70 and U2AF1 but not U2AF2. Binds SREK1/SFRS12. Interacts with SAFB/SAFB1. Interacts with PSIP1/LEDGF. Interacts with RSRC1 (via Arg/Ser-rich domain). Interacts with ZRSR2/U2AF1-RS2. Interacts with CCDC55 (via C-terminus). Interacts with SRPK1 and a sliding docking interaction is essential for its sequential and processive phosphorylation by SRPK1. Interacts with NXF1. Interacts with CCNL1, CCNL2 and CDK11B. Interacts with RRP1B. Interacts (when phosphorylated in its RS domain) with TNPO3; promoting nuclear import. Interacts with ILDR1 (via C-terminus) and ILDR2. In terms of processing, phosphorylated by CLK1, CLK2, CLK3 and CLK4. Phosphorylated by SRPK1 at multiple serines in its RS domain via a directional (C-terminal to N-terminal) and a dual-track mechanism incorporating both processive phosphorylation (in which the kinase stays attached to the substrate after each round of phosphorylation) and distributive phosphorylation steps (in which the kinase and substrate dissociate after each phosphorylation event). The RS domain of SRSF1 binds to a docking groove in the large lobe of the kinase domain of SRPK1 and this induces certain structural changes in SRPK1 and/or RRM 2 domain of SRSF1, allowing RRM 2 to bind the kinase and initiate phosphorylation. The cycles continue for several phosphorylation steps in a processive manner (steps 1-8) until the last few phosphorylation steps (approximately steps 9-12). During that time, a mechanical stress induces the unfolding of the beta-4 motif in RRM 2, which then docks at the docking groove of SRPK1. This also signals RRM 2 to begin to dissociate, which facilitates SRSF1 dissociation after phosphorylation is completed. Asymmetrically dimethylated at arginines, probably by PRMT1, methylation promotes localization to nuclear speckles.

The protein resides in the cytoplasm. It is found in the nucleus speckle. In terms of biological role, plays a role in preventing exon skipping, ensuring the accuracy of splicing and regulating alternative splicing. Interacts with other spliceosomal components, via the RS domains, to form a bridge between the 5'- and 3'-splice site binding components, U1 snRNP and U2AF. Can stimulate binding of U1 snRNP to a 5'-splice site-containing pre-mRNA. Binds to purine-rich RNA sequences, either the octamer, 5'-RGAAGAAC-3' (r=A or G) or the decamers, AGGACAGAGC/AGGACGAAGC. Binds preferentially to the 5'-CGAGGCG-3' motif in vitro. Three copies of the octamer constitute a powerful splicing enhancer in vitro, the ASF/SF2 splicing enhancer (ASE) which can specifically activate ASE-dependent splicing. May function as export adapter involved in mRNA nuclear export through the TAP/NXF1 pathway. The protein is Serine/arginine-rich splicing factor 1 (SRSF1) of Bos taurus (Bovine).